The sequence spans 263 residues: Energy-coupling factor transporter transmembrane protein EcfT (263 aa).

A run of 4 helical transmembrane segments spans residues 22 to 42, 69 to 89, 105 to 125, and 243 to 263; these read IIFAFCFIPLVFLANNAATNI, ILFLIIFTFIIQLLFTREGAV, LAIIVSLRFFYLVSITTLVTL, and TGLILLLVALGLLLVYLRGGF.

The protein belongs to the energy-coupling factor EcfT family. In terms of assembly, forms a stable energy-coupling factor (ECF) transporter complex composed of 2 membrane-embedded substrate-binding proteins (S component), 2 ATP-binding proteins (A component) and 2 transmembrane proteins (T component). May be able to interact with more than 1 S component at a time.

Its subcellular location is the cell membrane. Functionally, transmembrane (T) component of an energy-coupling factor (ECF) ABC-transporter complex. Unlike classic ABC transporters this ECF transporter provides the energy necessary to transport a number of different substrates. This chain is Energy-coupling factor transporter transmembrane protein EcfT, found in Exiguobacterium sibiricum (strain DSM 17290 / CCUG 55495 / CIP 109462 / JCM 13490 / 255-15).